The chain runs to 591 residues: L-fucose isomerase (591 aa).

Active-site proton acceptor residues include E337 and D361. Mn(2+) contacts are provided by E337, D361, and H528.

Belongs to the L-fucose isomerase family. As to quaternary structure, homohexamer. The cofactor is Mn(2+).

It is found in the cytoplasm. It carries out the reaction L-fucose = L-fuculose. Its pathway is carbohydrate degradation; L-fucose degradation; L-lactaldehyde and glycerone phosphate from L-fucose: step 1/3. Functionally, converts the aldose L-fucose into the corresponding ketose L-fuculose. In Escherichia coli O157:H7 (strain EC4115 / EHEC), this protein is L-fucose isomerase.